Reading from the N-terminus, the 330-residue chain is Malate dehydrogenase (330 aa).

13 to 19 (GAAGQIG) provides a ligand contact to NAD(+). R94 and R100 together coordinate substrate. NAD(+)-binding positions include N107, Q114, and 131–133 (VGN). Residues N133 and R164 each coordinate substrate. H189 functions as the Proton acceptor in the catalytic mechanism.

The protein belongs to the LDH/MDH superfamily. MDH type 2 family.

The catalysed reaction is (S)-malate + NAD(+) = oxaloacetate + NADH + H(+). In terms of biological role, catalyzes the reversible oxidation of malate to oxaloacetate. The protein is Malate dehydrogenase of Deinococcus radiodurans (strain ATCC 13939 / DSM 20539 / JCM 16871 / CCUG 27074 / LMG 4051 / NBRC 15346 / NCIMB 9279 / VKM B-1422 / R1).